We begin with the raw amino-acid sequence, 362 residues long: Porin Omp2b (362 aa).

The signal sequence occupies residues 1–22 (MNIKSLLLGSAAALVAASGAQA).

It belongs to the alphaproteobacteria porin family. Homotrimer.

Its subcellular location is the cell outer membrane. Functionally, forms passive diffusion pores that allow small molecular weight hydrophilic materials across the outer membrane. The chain is Porin Omp2b (omp2b) from Brucella abortus (strain S19).